The sequence spans 292 residues: Protein sarah (292 aa).

A compositionally biased stretch (low complexity) spans 1 to 51 (MSDAAKSNNNASADAPDPTTPDATGEADAANAATPTTPRGNHNNNNSANGR). The interval 1-111 (MSDAAKSNNN…TEPEVDADSF (111 aa)) is disordered. A phosphoserine mark is found at serine 67, serine 72, and serine 100. Acidic residues predominate over residues 98–111 (VDSDTEPEVDADSF). 2 positions are modified to phosphothreonine: threonine 102 and threonine 196. Residues serine 215 and serine 219 each carry the phosphoserine modification. Threonine 246 bears the Phosphothreonine mark.

Belongs to the RCAN family. As to quaternary structure, interacts with Pp2B-14D, CanA-14F and CanB2. In terms of processing, phosphorylation at Ser-215 and Ser-219 is essential for calcineurin activation and completion of female meiosis. Sgg is required for phosphorylation of Ser-215 in activated eggs. Ser-100, Thr-102 and Ser-219 are highly phosphorylated in both ovaries and activated eggs; however, phosphorylation at Ser-100 or Thr-102 is not required for sra function in completion of female meiosis. In terms of tissue distribution, expressed in central nervous system of the third instar larvae, with a relatively intense signal in the brain and weak signals in the ventral ganglion. Relatively low, but ubiquitous expression level is observed in leg and wing imaginal disks, no signal is detected in the eye-antennal disks. Expressed in all neurons in the adult brain.

Required for elongation of meiosis I spindle. Critical for ovulation, meiotic progression in oocytes and female courtship behavior, including their postmating changes. Regulates female meiosis by controlling calcineurin activity in the germline. Has a role in calcium signaling during egg activation; bcd mRNA polyadenylation and translation in the oocyte. This chain is Protein sarah (sra), found in Drosophila melanogaster (Fruit fly).